Consider the following 331-residue polypeptide: Adenosine deaminase (331 aa).

Residues histidine 12 and histidine 14 each coordinate Zn(2+). Positions 14, 16, and 170 each coordinate substrate. Residue histidine 197 coordinates Zn(2+). Glutamate 200 (proton donor) is an active-site residue. Position 278 (aspartate 278) interacts with Zn(2+). Aspartate 279 is a binding site for substrate.

The protein belongs to the metallo-dependent hydrolases superfamily. Adenosine and AMP deaminases family. Adenosine deaminase subfamily. The cofactor is Zn(2+).

The enzyme catalyses adenosine + H2O + H(+) = inosine + NH4(+). It catalyses the reaction 2'-deoxyadenosine + H2O + H(+) = 2'-deoxyinosine + NH4(+). Its function is as follows. Catalyzes the hydrolytic deamination of adenosine and 2-deoxyadenosine. This is Adenosine deaminase from Shewanella sp. (strain MR-7).